The chain runs to 1148 residues: Autophagy-related protein 11 (1148 aa).

Positions 567–570 match the AIM (Atg8-family-interacting motif) motif; sequence FDDI. Positions 699–710 are enriched in basic and acidic residues; it reads KAEASSDVEGNK. Disordered regions lie at residues 699 to 727, 754 to 777, and 784 to 803; these read KAEA…CVSN, PLDS…EAGE, and NSST…ATGR. 2 stretches are compositionally biased toward polar residues: residues 754–767 and 784–793; these read PLDS…QNNE and NSSTAESPQK. 2 coiled-coil regions span residues 816–868 and 956–996; these read ELRN…HLEN and DKVS…VKTL. T851 bears the Phosphothreonine mark. An AIM (Atg8-family-interacting motif) motif is present at residues 1130 to 1133; it reads YFIV.

Belongs to the ATG11 family. As to quaternary structure, homodimer. Interacts with ATG8E, ATG13A and ATG101. Binds to ATG8E on autophagic vesicles.

The protein localises to the cytoplasmic vesicle. The protein resides in the autophagosome. Accessory protein involved in autophagy. Acts as a scaffold protein of the ATG1-ATG13 complex for faithful delivery of autophagic vesicles to the vacuole. Involved in the stress-induced phosphorylation of ATG1A for turnover of ATG1-ATG13 complex and proper ATG1-ATG13 complex assembly or activity. Required for selective mitophagy. Required for senescence-induced breakdown of mitochondria-resident proteins and mitochondrial vesicles. Seems not essential for ATG8-mediated autophagy. The chain is Autophagy-related protein 11 from Arabidopsis thaliana (Mouse-ear cress).